A 286-amino-acid chain; its full sequence is Aquaporin NIP4-1 (286 aa).

2 helical membrane passes run 59-79 (VMVEGLASFLVVFWSCVAALM) and 86-106 (LTFPMVCLVVAMTVAFVLSWL). The NPA 1 signature appears at 112 to 114 (NPA). 3 helical membrane-spanning segments follow: residues 133 to 153 (LYVAAQLAGSLLACLSVNAVM), 173 to 193 (LPFLMEFLASAVLMIVIATVA), and 201 to 221 (TVGGIAIGAAVGGLGLVIGPV). Positions 227-229 (NPA) match the NPA 2 motif. The chain crosses the membrane as a helical span at residues 241–261 (YDGVWIYVVAPVAGMLVGALC).

This sequence belongs to the MIP/aquaporin (TC 1.A.8) family. NIP (TC 1.A.8.12) subfamily. In terms of tissue distribution, expressed in leaves and at lower levels in roots.

The protein localises to the membrane. Functionally, aquaporins facilitate the transport of water and small neutral solutes across cell membranes. This is Aquaporin NIP4-1 (NIP4-1) from Oryza sativa subsp. japonica (Rice).